The sequence spans 479 residues: MAQHTVYFPDAFLTQMREAMPSTLSFDDFLAACQRPLRRSIRVNTLKISVADFLQLTAPYGWTLTPIPWCEEGFWIERDDEDALPLGSTAEHLSGLFYIQEASSMLPVAALFADGNSPQRVMDVAAAPGSKTTQIAARMNNEGAILANEFSASRVKVLHANISRCGIRNVALTHFDGRVFGAALPEMFDAILLDAPCSGEGVVRKDPDALKNWSPESNQEIAATQRELIDSAFHALRPGGTLVYSTCTLNREENEAVCLWLKETYPDAVEFLPLGDLFPGADKALTEEGFLHVFPQIYDCEGFFVARLRKTQAIPALPAPKYKVGNFPFIPVKNREAGQICQAAASVGLTWDENLRLWQRDKELWLFPVGIEALIGKVRFSRLGIKLAETHNKGYRWQHEAVIALASPDNVNAFELTPQKAEEWYRGRDVYPQAAPVADDVLVTFQHQPIGLAKRIGSRLKNSYPRELVRDGKLFTGNA.

Residues 125 to 131, Glu149, Asp176, and Asp194 contribute to the S-adenosyl-L-methionine site; that span reads AAAPGSK. Cys247 acts as the Nucleophile in catalysis.

It belongs to the class I-like SAM-binding methyltransferase superfamily. RsmB/NOP family.

The protein localises to the cytoplasm. It carries out the reaction cytidine(1407) in 16S rRNA + S-adenosyl-L-methionine = 5-methylcytidine(1407) in 16S rRNA + S-adenosyl-L-homocysteine + H(+). In terms of biological role, specifically methylates the cytosine at position 1407 (m5C1407) of 16S rRNA. This chain is Ribosomal RNA small subunit methyltransferase F, found in Escherichia fergusonii (strain ATCC 35469 / DSM 13698 / CCUG 18766 / IAM 14443 / JCM 21226 / LMG 7866 / NBRC 102419 / NCTC 12128 / CDC 0568-73).